Here is a 390-residue protein sequence, read N- to C-terminus: MRALEESYDVVVVGAGPAGSMSSYNASKNGAKTLLIEKAQEIGTPVRCAEAIPRIESFGINPSSEFIRSYIKGAYLVAPNGKKITVKGGKTDGYVVERKIFDKFLAIRSAKEGTKIAVKSRVTGLEKTEEGYNVFVNHLGKEYTVKTKLVIAADGVESTISEYAGLKSKKNHNEVCSCAEYEMTNVKLLDNNMMEFYFGEICPKGYIWLFPKGDTVNVGIGIIEGSKKAIEYLDDFLSNPLLEGRLKNAVPVEFKVGGDPVGGPIKKTFKDNLIVVGDAAGHVSPLTGGGISLAMDCGLIAGEVCAKSISSKNYSEEFLSQYETRWKEKHYKFLMNDLKYKTILQKLNDNELNAIADSIPENLEEVDVGKLAIKIVKKAPSLLKYFKELI.

Residues Ala-18, Glu-37, Cys-48, Ala-49, Ala-51, Arg-98, Val-122, Asp-278, Gly-290, and Ile-291 each contribute to the FAD site. Val-368 contacts a 2,3-bis-O-(geranylgeranyl)-sn-glycerol 1-phospholipid.

The protein belongs to the geranylgeranyl reductase family. DGGGPL reductase subfamily. FAD is required as a cofactor.

The catalysed reaction is a 2,3-bis-O-phytanyl-sn-glycerol 1-phospholipid + 8 A = a 2,3-bis-O-(geranylgeranyl)-sn-glycerol 1-phospholipid + 8 AH2. It catalyses the reaction 2,3-bis-O-(phytanyl)-sn-glycerol 1-phosphate + 8 A = 2,3-bis-O-(geranylgeranyl)-sn-glycerol 1-phosphate + 8 AH2. The enzyme catalyses CDP-2,3-bis-O-(geranylgeranyl)-sn-glycerol + 8 AH2 = CDP-2,3-bis-O-(phytanyl)-sn-glycerol + 8 A. It carries out the reaction archaetidylserine + 8 AH2 = 2,3-bis-O-phytanyl-sn-glycero-3-phospho-L-serine + 8 A. It participates in membrane lipid metabolism; glycerophospholipid metabolism. In terms of biological role, is involved in the reduction of 2,3-digeranylgeranylglycerophospholipids (unsaturated archaeols) into 2,3-diphytanylglycerophospholipids (saturated archaeols) in the biosynthesis of archaeal membrane lipids. Catalyzes the formation of archaetidic acid (2,3-di-O-phytanyl-sn-glyceryl phosphate) from 2,3-di-O-geranylgeranylglyceryl phosphate (DGGGP) via the hydrogenation of each double bond of the isoprenoid chains. Is also probably able to reduce double bonds of geranyl groups in CDP-2,3-bis-O-(geranylgeranyl)-sn-glycerol and archaetidylserine, thus acting at various stages in the biosynthesis of archaeal membrane lipids. The polypeptide is Digeranylgeranylglycerophospholipid reductase (Methanococcus vannielii (strain ATCC 35089 / DSM 1224 / JCM 13029 / OCM 148 / SB)).